A 70-amino-acid chain; its full sequence is MGSLWSKISQLFVDAFTEFLVSVVDIAIFLAILFGFTVAGWLLVFLLRVVCSALLRSRSAIHSPELSKVL.

Glycine 2 is lipidated: N-myristoyl glycine; by host. The tract at residues 2–15 is endoplasmic reticulum retention signal; it reads GSLWSKISQLFVDA. Over 2–25 the chain is Virion surface; sequence GSLWSKISQLFVDAFTEFLVSVVD. A helical transmembrane segment spans residues 26-46; the sequence is IAIFLAILFGFTVAGWLLVFL. Residues 47-70 are Intravirion-facing; sequence LRVVCSALLRSRSAIHSPELSKVL.

Belongs to the arteriviridae E protein family. As to quaternary structure, homooligomer. Associates with itself into higher-order structures, including dimers, trimers and tetramers. Associates with the GP2a-GP3-GP4 complex. Post-translationally, myristoylated. In terms of processing, not glycosylated.

It localises to the virion membrane. Its subcellular location is the host endoplasmic reticulum membrane. It is found in the host Golgi apparatus membrane. The protein localises to the secreted. Minor envelope protein. May function as a viroporin in the virion envelope that facilitates uncoating of the virus in order to release the genomic RNA into the cytoplasm for subsequent replication. This is Envelope small membrane protein (GP2b) from Sus scrofa (Pig).